The chain runs to 75 residues: Probable pilin MJ0431 (75 aa).

Positions 1–15 (MGKMKILKKLLSKKG) are excised as a propeptide. The short motif at 16 to 24 (QLSMEVGVL) is the QXSXEXXXL element.

In terms of processing, the N-terminus is cleaved by the prepilin peptidase EppA, which recognizes the class III signal sequence.

Its subcellular location is the secreted. It is found in the cell surface. The protein resides in the fimbrium. The protein is Probable pilin MJ0431 of Methanocaldococcus jannaschii (strain ATCC 43067 / DSM 2661 / JAL-1 / JCM 10045 / NBRC 100440) (Methanococcus jannaschii).